The primary structure comprises 144 residues: Large ribosomal subunit protein uL15 (144 aa).

Residues methionine 1–arginine 48 form a disordered region.

The protein belongs to the universal ribosomal protein uL15 family. As to quaternary structure, part of the 50S ribosomal subunit.

Functionally, binds to the 23S rRNA. The chain is Large ribosomal subunit protein uL15 from Chlamydia muridarum (strain MoPn / Nigg).